We begin with the raw amino-acid sequence, 603 residues long: Serine/threonine-protein kinase PLK1 (603 aa).

The interval 1 to 35 (MSAAVTAGKLARAPADPGKAGVPGVAAPGAPAAAP) is disordered. Residue S2 is modified to N-acetylserine. T6 carries the post-translational modification Phosphothreonine. The span at 13 to 35 (APADPGKAGVPGVAAPGAPAAAP) shows a compositional bias: low complexity. K19 is covalently cross-linked (Glycyl lysine isopeptide (Lys-Gly) (interchain with G-Cter in ubiquitin)). Residues 53-305 (YVRGRFLGKG…INELLNDEFF (253 aa)) enclose the Protein kinase domain. Residues 59 to 67 (LGKGGFAKC) and K82 contribute to the ATP site. At S103 the chain carries Phosphoserine. Position 131 (E131) interacts with ATP. Phosphoserine is present on S137. The active-site Proton acceptor is the D176. ATP contacts are provided by residues 178–181 (KLGN) and D194. The tract at residues 194 to 221 (DFGLATKVEYDGERKKTLCGTPNYIAPE) is activation loop. At T210 the chain carries Phosphothreonine; by AURKA. T214 bears the Phosphothreonine mark. S269 carries the post-translational modification Phosphoserine; by autocatalysis. The residue at position 335 (S335) is a Phosphoserine. The short motif at 337–340 (RKPL) is the D-box that targets the protein for proteasomal degradation in anaphase element. K338 is covalently cross-linked (Glycyl lysine isopeptide (Lys-Gly) (interchain with G-Cter in SUMO2)). The disordered stretch occupies residues 338–364 (KPLTVLNKGLENPLPERPREKEEPVVR). Over residues 351 to 364 (LPERPREKEEPVVR) the composition is skewed to basic and acidic residues. 2 positions are modified to phosphoserine: S375 and S450. A POLO box 1 domain is found at 410–488 (WVSKWVDYSD…LKYFRNYMSE (79 aa)). K492 participates in a covalent cross-link: Glycyl lysine isopeptide (Lys-Gly) (interchain with G-Cter in ubiquitin). A linker region spans residues 493–507 (AGANITPREGDELAR). T498 carries the phosphothreonine modification. One can recognise a POLO box 2 domain in the interval 510–592 (YLRTWFRTRS…ARTMVDKLLS (83 aa)). Positions 538 to 540 (HTK) are important for interaction with phosphorylated proteins.

Belongs to the protein kinase superfamily. Ser/Thr protein kinase family. CDC5/Polo subfamily. As to quaternary structure, interacts with CEP170. Interacts with EVI5. Interacts with FAM29A. Interacts with SLX4/BTBD12. Interacts with TTDN1. Interacts (via POLO-box domain) with the phosphorylated form of BUB1, CDC25C and CENPU. Interacts with KIF2A. Interacts with CYLD. Part of an astrin (SPAG5)-kinastrin (SKAP) complex containing KNSTRN, SPAG5, PLK1, DYNLL1 and SGO2. Interacts with BIRC6/bruce. Interacts with CDK1-phosphorylated FRY; this interaction occurs in mitotic cells, but not in interphase cells. FRY interaction facilitates AURKA-mediated PLK1 phosphorylation. Interacts with CDK1-phosphorylated DCTN6 during mitotic prometaphase; the interaction facilitates recruitment to kinetochores. Interacts with CEP68; the interaction phosphorylates CEP68. Interacts (via POLO-box domain) with DCTN1. Interacts with CEP20 in later G1, S, G2 and M phases of the cell cycle; this interaction recruits PLK1 to centrosomes, a step required for S phase progression. Interacts with KLHL22. Interacts (via POLO box domains) with NEDD9/HEF1 (via C-terminus). Interacts with FIRRM (via N-terminus region); required for maintaining, but not activating, PLK1 kinase activity. Interacts with FZR1. Interacts with SKA3; the interaction promotes the stability of PLK1; the interaction promotes the stability of PLK1. Interacts with the MTMR3:MTMR4 heterooligomer; brings CEP55 and PLK1 together during early mitosis, regulating the phosphorylation of CEP55 by PLK1 and its recruitment to the midbody where it can mediate cell abscission. In terms of processing, catalytic activity is enhanced by phosphorylation of Thr-210. Phosphorylation at Thr-210 is first detected on centrosomes in the G2 phase of the cell cycle, peaks in prometaphase and gradually disappears from centrosomes during anaphase. Dephosphorylation at Thr-210 at centrosomes is probably mediated by protein phosphatase 1C (PP1C), via interaction with PPP1R12A/MYPT1. Autophosphorylation and phosphorylation of Ser-137 may not be significant for the activation of PLK1 during mitosis, but may enhance catalytic activity during recovery after DNA damage checkpoint. Phosphorylated in vitro by STK10. Ubiquitinated by the anaphase promoting complex/cyclosome (APC/C) in anaphase and following DNA damage, leading to its degradation by the proteasome. Ubiquitination is mediated via its interaction with FZR1/CDH1. Ubiquitination and subsequent degradation prevents entry into mitosis and is essential to maintain an efficient G2 DNA damage checkpoint. Monoubiquitination at Lys-492 by the BCR(KLHL22) ubiquitin ligase complex does not lead to degradation: it promotes PLK1 dissociation from phosphoreceptor proteins and subsequent removal from kinetochores, allowing silencing of the spindle assembly checkpoint (SAC) and chromosome segregation. As to expression, placenta and colon.

It localises to the nucleus. It is found in the chromosome. The protein resides in the centromere. The protein localises to the kinetochore. Its subcellular location is the cytoplasm. It localises to the cytoskeleton. It is found in the microtubule organizing center. The protein resides in the centrosome. The protein localises to the spindle. Its subcellular location is the midbody. It catalyses the reaction L-seryl-[protein] + ATP = O-phospho-L-seryl-[protein] + ADP + H(+). It carries out the reaction L-threonyl-[protein] + ATP = O-phospho-L-threonyl-[protein] + ADP + H(+). Its activity is regulated as follows. Activated by phosphorylation of Thr-210 by AURKA; phosphorylation by AURKA is enhanced by BORA. Once activated, activity is stimulated by binding target proteins. Binding of target proteins has no effect on the non-activated kinase. Several inhibitors targeting PLKs are currently in development and are under investigation in a growing number of clinical trials, such as BI 2536, an ATP-competitive PLK1 inhibitor or BI 6727, a dihydropteridinone that specifically inhibits the catalytic activity of PLK1. In terms of biological role, serine/threonine-protein kinase that performs several important functions throughout M phase of the cell cycle, including the regulation of centrosome maturation and spindle assembly, the removal of cohesins from chromosome arms, the inactivation of anaphase-promoting complex/cyclosome (APC/C) inhibitors, and the regulation of mitotic exit and cytokinesis. Polo-like kinase proteins act by binding and phosphorylating proteins that are already phosphorylated on a specific motif recognized by the POLO box domains. Phosphorylates BORA, BUB1B/BUBR1, CCNB1, CDC25C, CEP55, ECT2, ERCC6L, FBXO5/EMI1, FOXM1, KIF20A/MKLP2, CENPU, NEDD1, NINL, NPM1, NUDC, PKMYT1/MYT1, KIZ, MRE11, PPP1R12A/MYPT1, POLQ, PRC1, RACGAP1/CYK4, RAD51, RHNO1, SGO1, STAG2/SA2, TEX14, TOPORS, p73/TP73, TPT1, WEE1 and HNRNPU. Plays a key role in centrosome functions and the assembly of bipolar spindles by phosphorylating KIZ, NEDD1 and NINL. NEDD1 phosphorylation promotes subsequent targeting of the gamma-tubulin ring complex (gTuRC) to the centrosome, an important step for spindle formation. Phosphorylation of NINL component of the centrosome leads to NINL dissociation from other centrosomal proteins. Involved in mitosis exit and cytokinesis by phosphorylating CEP55, ECT2, KIF20A/MKLP2, CENPU, PRC1 and RACGAP1. Recruited at the central spindle by phosphorylating and docking PRC1 and KIF20A/MKLP2; creates its own docking sites on PRC1 and KIF20A/MKLP2 by mediating phosphorylation of sites subsequently recognized by the POLO box domains. Phosphorylates RACGAP1, thereby creating a docking site for the Rho GTP exchange factor ECT2 that is essential for the cleavage furrow formation. Promotes the central spindle recruitment of ECT2. Plays a central role in G2/M transition of mitotic cell cycle by phosphorylating CCNB1, CDC25C, FOXM1, CENPU, PKMYT1/MYT1, PPP1R12A/MYPT1 and WEE1. Part of a regulatory circuit that promotes the activation of CDK1 by phosphorylating the positive regulator CDC25C and inhibiting the negative regulators WEE1 and PKMYT1/MYT1. Also acts by mediating phosphorylation of cyclin-B1 (CCNB1) on centrosomes in prophase. Phosphorylates FOXM1, a key mitotic transcription regulator, leading to enhance FOXM1 transcriptional activity. Involved in kinetochore functions and sister chromatid cohesion by phosphorylating BUB1B/BUBR1, FBXO5/EMI1 and STAG2/SA2. PLK1 is high on non-attached kinetochores suggesting a role of PLK1 in kinetochore attachment or in spindle assembly checkpoint (SAC) regulation. Required for kinetochore localization of BUB1B. Regulates the dissociation of cohesin from chromosomes by phosphorylating cohesin subunits such as STAG2/SA2. Phosphorylates SGO1: required for spindle pole localization of isoform 3 of SGO1 and plays a role in regulating its centriole cohesion function. Mediates phosphorylation of FBXO5/EMI1, a negative regulator of the APC/C complex during prophase, leading to FBXO5/EMI1 ubiquitination and degradation by the proteasome. Acts as a negative regulator of p53 family members: phosphorylates TOPORS, leading to inhibit the sumoylation of p53/TP53 and simultaneously enhance the ubiquitination and subsequent degradation of p53/TP53. Phosphorylates the transactivation domain of the transcription factor p73/TP73, leading to inhibit p73/TP73-mediated transcriptional activation and pro-apoptotic functions. Phosphorylates BORA, and thereby promotes the degradation of BORA. Contributes to the regulation of AURKA function. Also required for recovery after DNA damage checkpoint and entry into mitosis. Phosphorylates MISP, leading to stabilization of cortical and astral microtubule attachments required for proper spindle positioning. Together with MEIKIN, acts as a regulator of kinetochore function during meiosis I: required both for mono-orientation of kinetochores on sister chromosomes and protection of centromeric cohesin from separase-mediated cleavage. Phosphorylates CEP68 and is required for its degradation. Regulates nuclear envelope breakdown during prophase by phosphorylating DCTN1 resulting in its localization in the nuclear envelope. Phosphorylates the heat shock transcription factor HSF1, promoting HSF1 nuclear translocation upon heat shock. Phosphorylates HSF1 also in the early mitotic period; this phosphorylation regulates HSF1 localization to the spindle pole, the recruitment of the SCF(BTRC) ubiquitin ligase complex induicing HSF1 degradation, and hence mitotic progression. Regulates mitotic progression by phosphorylating RIOK2. Through the phosphorylation of DZIP1 regulates the localization during mitosis of the BBSome, a ciliary protein complex involved in cilium biogenesis. Regulates DNA repair during mitosis by mediating phosphorylation of POLQ and RHNO1, thereby promoting POLQ recruitment to DNA damage sites. Phosphorylates ATXN10 which may play a role in the regulation of cytokinesis and may stimulate the proteasome-mediated degradation of ATXN10. The protein is Serine/threonine-protein kinase PLK1 (PLK1) of Homo sapiens (Human).